The following is a 246-amino-acid chain: MHGLIPDKLPRHLAIIMDGNGRWAQERMLTRIIGHQKGVETVRIIVEECSRLGIGYLTLFAFSAENWLRPKTEVKALMALLKKYIASEAARMDANNIRFNVIGNRDELPPDVNKAVQGAIDRTSGNTGMILTLALSYGARQEIMTAATRIASDIASGVLKADDLSETAFASYLFTSGLPDPDFLIRTSGEMRISNFLLWQLAYTEFYFSSVNWPEFTPEELYRALSDYQARERRFGRTSAQINTRS.

Aspartate 18 is an active-site residue. Aspartate 18 contacts Mg(2+). Substrate contacts are provided by residues 19–22 (GNGR), tryptophan 23, arginine 31, histidine 35, and 63–65 (SAE). Residue asparagine 66 is the Proton acceptor of the active site. Substrate contacts are provided by residues tryptophan 67, arginine 69, arginine 186, and 192–194 (RIS). Glutamate 205 is a Mg(2+) binding site.

This sequence belongs to the UPP synthase family. In terms of assembly, homodimer. The cofactor is Mg(2+).

Its function is as follows. Catalyzes the condensation of isopentenyl diphosphate (IPP) with allylic pyrophosphates generating different type of terpenoids. The chain is Isoprenyl transferase from Geobacter sulfurreducens (strain ATCC 51573 / DSM 12127 / PCA).